The sequence spans 321 residues: tRNA U34 carboxymethyltransferase (321 aa).

Residues Lys-90, Trp-104, Lys-109, Gly-129, 151 to 153, 180 to 181, Met-195, Tyr-199, and Arg-314 each bind carboxy-S-adenosyl-L-methionine; these read DPT and IE.

The protein belongs to the class I-like SAM-binding methyltransferase superfamily. CmoB family. In terms of assembly, homotetramer.

It catalyses the reaction carboxy-S-adenosyl-L-methionine + 5-hydroxyuridine(34) in tRNA = 5-carboxymethoxyuridine(34) in tRNA + S-adenosyl-L-homocysteine + H(+). In terms of biological role, catalyzes carboxymethyl transfer from carboxy-S-adenosyl-L-methionine (Cx-SAM) to 5-hydroxyuridine (ho5U) to form 5-carboxymethoxyuridine (cmo5U) at position 34 in tRNAs. This chain is tRNA U34 carboxymethyltransferase, found in Haemophilus influenzae (strain PittEE).